The following is a 215-amino-acid chain: ATP-dependent Clp protease proteolytic subunit 1 (215 aa).

The active-site Nucleophile is Ser-111. Residue His-136 is part of the active site.

Belongs to the peptidase S14 family. As to quaternary structure, fourteen ClpP subunits assemble into 2 heptameric rings which stack back to back to give a disk-like structure with a central cavity, resembling the structure of eukaryotic proteasomes.

The protein localises to the cytoplasm. The enzyme catalyses Hydrolysis of proteins to small peptides in the presence of ATP and magnesium. alpha-casein is the usual test substrate. In the absence of ATP, only oligopeptides shorter than five residues are hydrolyzed (such as succinyl-Leu-Tyr-|-NHMec, and Leu-Tyr-Leu-|-Tyr-Trp, in which cleavage of the -Tyr-|-Leu- and -Tyr-|-Trp bonds also occurs).. In terms of biological role, cleaves peptides in various proteins in a process that requires ATP hydrolysis. Has a chymotrypsin-like activity. Plays a major role in the degradation of misfolded proteins. In Gluconobacter oxydans (strain 621H) (Gluconobacter suboxydans), this protein is ATP-dependent Clp protease proteolytic subunit 1.